The primary structure comprises 317 residues: Porphobilinogen deaminase (317 aa).

The residue at position 245 (Cys245) is an S-(dipyrrolylmethanemethyl)cysteine.

This sequence belongs to the HMBS family. As to quaternary structure, monomer. Dipyrromethane serves as cofactor.

The enzyme catalyses 4 porphobilinogen + H2O = hydroxymethylbilane + 4 NH4(+). It participates in porphyrin-containing compound metabolism; protoporphyrin-IX biosynthesis; coproporphyrinogen-III from 5-aminolevulinate: step 2/4. Its pathway is porphyrin-containing compound metabolism; chlorophyll biosynthesis. In terms of biological role, tetrapolymerization of the monopyrrole PBG into the hydroxymethylbilane pre-uroporphyrinogen in several discrete steps. In Prochlorococcus marinus (strain MIT 9313), this protein is Porphobilinogen deaminase.